A 69-amino-acid polypeptide reads, in one-letter code: Large ribosomal subunit protein bL31 (69 aa).

Residues cysteine 17, cysteine 19, cysteine 37, and cysteine 40 each contribute to the Zn(2+) site.

The protein belongs to the bacterial ribosomal protein bL31 family. Type A subfamily. Part of the 50S ribosomal subunit. It depends on Zn(2+) as a cofactor.

In terms of biological role, binds the 23S rRNA. In Caldanaerobacter subterraneus subsp. tengcongensis (strain DSM 15242 / JCM 11007 / NBRC 100824 / MB4) (Thermoanaerobacter tengcongensis), this protein is Large ribosomal subunit protein bL31.